A 640-amino-acid chain; its full sequence is Threonine--tRNA ligase (640 aa).

The TGS domain occupies 1-61 (MPIIALPDGN…EKDSEVNIIT (61 aa)). Positions 242-533 (DHRRIAKQMS…LIEHYAGRLP (292 aa)) are catalytic. The Zn(2+) site is built by cysteine 333, histidine 384, and histidine 510.

It belongs to the class-II aminoacyl-tRNA synthetase family. As to quaternary structure, homodimer. Requires Zn(2+) as cofactor.

Its subcellular location is the cytoplasm. It carries out the reaction tRNA(Thr) + L-threonine + ATP = L-threonyl-tRNA(Thr) + AMP + diphosphate + H(+). Functionally, catalyzes the attachment of threonine to tRNA(Thr) in a two-step reaction: L-threonine is first activated by ATP to form Thr-AMP and then transferred to the acceptor end of tRNA(Thr). Also edits incorrectly charged L-seryl-tRNA(Thr). This is Threonine--tRNA ligase from Prochlorococcus marinus (strain MIT 9313).